Reading from the N-terminus, the 507-residue chain is WD-40 repeat-containing protein MSI4 (507 aa).

The residue at position 1 (M1) is an N-acetylmethionine. Residues 1–66 are disordered; sequence MESDEAAAVS…KTQQSPSVDE (66 aa). WD repeat units follow at residues 95 to 137, 162 to 202, and 217 to 257; these read RWGP…KPRV, IHPG…NRHA, and GHQD…TTIG. Residues 258-272 show a composition bias toward polar residues; sequence TDSKSSGSIIKQTGE. The disordered stretch occupies residues 258–282; the sequence is TDSKSSGSIIKQTGEGTDKNESPTV. WD repeat units lie at residues 290-330, 335-375, 384-424, and 439-486; these read GHED…NPVT, AHDA…ANGV, GHKA…KKSD, and GHRD…YRPE. A DWD box motif is present at residues 308 to 323; sequence FCSVGDDSCLILWDAR.

The protein belongs to the WD repeat RBAP46/RBAP48/MSI1 family. Interacts with AHL16 and HOS1. Interacts with LHP1, PDP1, PDP2 and PDP3. Component of the PRC2 (polycomb repressive complex 2) complex which regulates histone methylation on histone H3K27. In terms of tissue distribution, expressed in rosette leaves, cauline leaves, main stems and developing fruits. Expressed at higher levels in roots and flowers.

The protein resides in the nucleus. In terms of biological role, core histone-binding subunit that may target chromatin assembly factors, chromatin remodeling factors and histone deacetylases to their histone substrates in a manner that is regulated by nucleosomal DNA. Component of the flowering autonomous pathway which positively regulates flowering by promoting transcriptional repression of the flowering repressor FLC. May promote histone deacetylation at the FLC locus leading to the formation of repressive chromatin structures. Forms a histone deacetylase complex with HDA5, HDA6 and FLD that represses FLC gene expression to control flowering time. Also negatively regulates cold-responsive genes. Acts together with PDP1 and MSI5 to regulate the function of the PRC2 complex on FLC. Required for systemic acquired resistance (SAR) toward pathogenic bacteria (e.g. Pseudomonas syringae pv tomato DC3000 (avrPto)). Together with FLD and MSI4/FVE, contributes to dehydroabietinal-dependent (DA, a diterpenoid tricyclic diterpene) activation of flowering ans SAR. The polypeptide is WD-40 repeat-containing protein MSI4 (Arabidopsis thaliana (Mouse-ear cress)).